Reading from the N-terminus, the 513-residue chain is Membrane protein (513 aa).

4 tandem repeats follow at residues 9 to 11, 12 to 14, 15 to 17, and 18 to 20. The tract at residues 9–20 is 4 X 3 AA tandem repeats of P-S-A; that stretch reads PSAPSAPSAPSA. The next 14 membrane-spanning stretches (helical) occupy residues 32 to 52, 56 to 76, 79 to 99, 126 to 146, 165 to 185, 208 to 228, 254 to 274, 309 to 329, 332 to 352, 360 to 380, 400 to 420, 422 to 442, 447 to 467, and 487 to 507; these read LTLH…LAIP, GLTV…VVWI, AVSY…LIGF, TALA…VTGL, ILIG…SATA, NIAA…NVGI, QWLI…YFLV, LAAV…LHSF, ATVT…VMDW, PWGT…LLST, GALL…LGFA, ATAL…TLPG, VGMT…PINA, and IGIP…ATYW.

It belongs to the SLC13A/DASS transporter (TC 2.A.47) family. DIT1 subfamily.

The protein resides in the cell membrane. The polypeptide is Membrane protein (Cupriavidus necator (strain ATCC 17699 / DSM 428 / KCTC 22496 / NCIMB 10442 / H16 / Stanier 337) (Ralstonia eutropha)).